We begin with the raw amino-acid sequence, 644 residues long: Replication protein E1 (644 aa).

The short motif at 86–88 is the Nuclear localization signal element; sequence KRK. Phosphoserine; by host occurs at positions 92 and 96. A DNA-binding region region spans residues 180-346; sequence VPTSPTNQLL…LTIIQHGVDD (167 aa). An SF3 helicase domain is found at 445 to 595; the sequence is VEFITFLCAL…LPFDKNRNPV (151 aa). 471-478 lines the ATP pocket; that stretch reads GPANTGKS. A Glycyl lysine isopeptide (Lys-Gly) (interchain with G-Cter in SUMO) cross-link involves residue Lys552.

Belongs to the papillomaviridae E1 protein family. In terms of assembly, can form hexamers. Interacts with E2 protein; this interaction increases E1 DNA binding specificity. Interacts with host DNA polymerase subunit POLA2. Interacts with host single stranded DNA-binding protein RPA1. Interacts with host TOP1; this interaction stimulates the enzymatic activity of TOP1. Phosphorylated. In terms of processing, sumoylated.

It is found in the host nucleus. The enzyme catalyses Couples ATP hydrolysis with the unwinding of duplex DNA by translocating in the 3'-5' direction.. It carries out the reaction ATP + H2O = ADP + phosphate + H(+). Functionally, ATP-dependent DNA 3'-5' helicase required for initiation of viral DNA replication. It forms a complex with the viral E2 protein. The E1-E2 complex binds to the replication origin which contains binding sites for both proteins. During the initial step, a dimer of E1 interacts with a dimer of protein E2 leading to a complex that binds the viral origin of replication with high specificity. Then, a second dimer of E1 displaces the E2 dimer in an ATP-dependent manner to form the E1 tetramer. Following this, two E1 monomers are added to each half of the site, which results in the formation of two E1 trimers on the viral ori. Subsequently, two hexamers will be created. The double hexamer acts as a bi-directional helicase machinery and unwinds the viral DNA and then recruits the host DNA polymerase to start replication. This chain is Replication protein E1, found in Human papillomavirus 59.